A 39-amino-acid polypeptide reads, in one-letter code: Phospholipase A2 (39 aa).

His36 is an active-site residue.

Belongs to the phospholipase A2 family. Group III subfamily. Ca(2+) serves as cofactor. As to expression, expressed by the venom gland.

Its subcellular location is the secreted. It catalyses the reaction a 1,2-diacyl-sn-glycero-3-phosphocholine + H2O = a 1-acyl-sn-glycero-3-phosphocholine + a fatty acid + H(+). Its function is as follows. PLA2 catalyzes the calcium-dependent hydrolysis of the 2-acyl groups in 3-sn-phosphoglycerides. The sequence is that of Phospholipase A2 from Heloderma horridum horridum (Mexican beaded lizard).